Consider the following 224-residue polypeptide: Charged multivesicular body protein 3 (224 aa).

Gly2 carries the N-myristoyl glycine lipid modification. Residues 2–113 (GLFGKTQEKP…LQKSTEVMKA (112 aa)) form an intramolecular interaction with C-terminus region. Residues 22–54 (KIRKEMRVVDRQIRDIQREEEKVKRSVKDAAKK) are a coiled coil. Important for autoinhibitory function regions lie at residues 59–64 (VCVVLA) and 168–169 (IL). The stretch at 149–224 (ESMDDQEEME…MQSRLATLRS (76 aa)) forms a coiled coil. Residues 151–222 (MDDQEEMEEA…EAMQSRLATL (72 aa)) form an intramolecular interaction with N-terminus region. Positions 151 to 224 (MDDQEEMEEA…MQSRLATLRS (74 aa)) are interaction with VPS4A. A Glycyl lysine isopeptide (Lys-Gly) (interchain with G-Cter in ubiquitin) cross-link involves residue Lys179. Residues 180 to 224 (APSKVTDALPEPEPAGAMAASEEGEEEEDEEDLEAMQSRLATLRS) are disordered. Interaction with STAMBP stretches follow at residues 196–224 (AMAA…TLRS), 205–209 (EEEDE), and 223–224 (RS). Phosphoserine is present on Ser200. Residues 201–213 (EEGEEEEDEEDLE) carry the MIT-interacting motif motif. Over residues 201–213 (EEGEEEEDEEDLE) the composition is skewed to acidic residues.

The protein belongs to the SNF7 family. In terms of assembly, probable core component of the endosomal sorting required for transport complex III (ESCRT-III). ESCRT-III components are thought to multimerize to form a flat lattice on the perimeter membrane of the endosome. Several assembly forms of ESCRT-III may exist that interact and act sequentially. Forms a metastable monomer in solution; its core structure (without part of the putative autoinhibitory C-terminal acidic region) oligomerizes into a flat lattice via two different dimerization interfaces. In vitro, heteromerizes with CHMP2A (but not CHMP4) to form helical tubular structures that expose membrane-interacting sites on the outside whereas VPS4B can associate on the inside of the tubule. May interact with IGFBP7; the relevance of such interaction however remains unclear. Interacts with CHMP2A. Interacts with CHMP4A; the interaction requires the release of CHMP4A autoinhibition. Interacts with VPS4A. Interacts with STAMBP; the interaction appears to relieve the autoinhibition of CHMP3. Interacts with VTA1. Expressed in lung, testis, heart, spleen, skeletal muscle, kidney, liver and brain.

Its subcellular location is the cytoplasm. It is found in the cytosol. The protein resides in the membrane. It localises to the endosome. The protein localises to the late endosome membrane. Its function is as follows. Probable core component of the endosomal sorting required for transport complex III (ESCRT-III) which is involved in multivesicular bodies (MVBs) formation and sorting of endosomal cargo proteins into MVBs. MVBs contain intraluminal vesicles (ILVs) that are generated by invagination and scission from the limiting membrane of the endosome and mostly are delivered to lysosomes enabling degradation of membrane proteins, such as stimulated growth factor receptors, lysosomal enzymes and lipids. The MVB pathway appears to require the sequential function of ESCRT-O, -I,-II and -III complexes. ESCRT-III proteins mostly dissociate from the invaginating membrane before the ILV is released. The ESCRT machinery also functions in topologically equivalent membrane fission events, such as the terminal stages of cytokinesis. ESCRT-III proteins are believed to mediate the necessary vesicle extrusion and/or membrane fission activities, possibly in conjunction with the AAA ATPase VPS4. Selectively binds to phosphatidylinositol 3,5-bisphosphate PtdIns(3,5)P2 and PtdIns(3,4)P2 in preference to other phosphoinositides tested. Involved in late stages of cytokinesis. Plays a role in endosomal sorting/trafficking of EGF receptor. This Mus musculus (Mouse) protein is Charged multivesicular body protein 3 (Chmp3).